A 561-amino-acid chain; its full sequence is Inner membrane ABC transporter ATP-binding protein YddA (561 aa).

At 1–3 (MIT) the chain is on the cytoplasmic side. Residues 4 to 24 (IPITLRMLIAKYLCLLKPFWL) traverse the membrane as a helical segment. Residues 25–31 (RKNNKTS) are Periplasmic-facing. The chain crosses the membrane as a helical span at residues 32–52 (VLLIIIILAMILGVVKIQVWL). The ABC transmembrane type-1 domain maps to 35-337 (IIIILAMILG…FIYKYDELAE (303 aa)). The Cytoplasmic portion of the chain corresponds to 53-70 (NDWNNDFFNALSQKETDK). A helical membrane pass occupies residues 71–91 (LWQLVLWFPALLGIFVLISVN). At 92 to 151 (KTWLIKLLTIRWREWLTDYYLNRWFADKNYYFTQIYGEHKNTDNPDQRIAEDILLLISKT) the chain is on the periplasmic side. A helical membrane pass occupies residues 152 to 172 (LSLSFGFIQSLSMLITFTVIL). Over 173–187 (WESAGTLSFTVGGTE) the chain is Cytoplasmic. Residues 188 to 208 (WNIQGYMVYTVVLIVIGGTLF) form a helical membrane-spanning segment. Residues 209–290 (THKVGKRIRP…WQNIYSRSLS (82 aa)) lie on the Periplasmic side of the membrane. The chain crosses the membrane as a helical span at residues 291–311 (VLPYFLLLPQFISGQINLGGL). Topologically, residues 312–561 (MKSRQAFMLV…DDICDISAVL (250 aa)) are cytoplasmic. The ABC transporter domain occupies 367–561 (VQVADASIRT…DDICDISAVL (195 aa)). 400-407 (GYSGAGKT) contributes to the ATP binding site.

It belongs to the ABC transporter superfamily.

Its subcellular location is the cell inner membrane. The protein is Inner membrane ABC transporter ATP-binding protein YddA (yddA) of Escherichia coli (strain K12).